The sequence spans 561 residues: DNA ligase (561 aa).

Glu247 is an ATP binding site. The active-site N6-AMP-lysine intermediate is the Lys249. Positions 254, 269, 299, 339, 414, and 420 each coordinate ATP.

This sequence belongs to the ATP-dependent DNA ligase family. As to quaternary structure, monomer. Mg(2+) serves as cofactor.

It catalyses the reaction ATP + (deoxyribonucleotide)n-3'-hydroxyl + 5'-phospho-(deoxyribonucleotide)m = (deoxyribonucleotide)n+m + AMP + diphosphate.. DNA ligase that seals nicks in double-stranded DNA during DNA replication, DNA recombination and DNA repair. This chain is DNA ligase, found in Pyrococcus furiosus (strain ATCC 43587 / DSM 3638 / JCM 8422 / Vc1).